The sequence spans 322 residues: MNCNYLWKSSALLKNLHRRAKIIFEIRNYFFNLGILEVETPILSNYSVTDVNFIPFKTKLQITKKRMWLVPSPEYHMKRLLVQNIGAIYQISRSFRNNEFGGPYHNPEFTMLEWYSPYCNMFDFMKKVEKFLVFCLKVVQVKYISYQRAFIKYLNIDPLLAKKRELLDLINKFKFNHLISDCDSISTLLEILFTLKIEPNLNNKKLIFVYHYPADQAILAAINDNDSRVSDRFEVFFKGVELGNGFYELTDQAEHIRRFKLNNIQRRHKGICSVEVDQFFLKSLSRGLPPCSGIAIGLDRLIMLSLNLKTINEVIAFPIERC.

72 to 74 is a substrate binding site; sequence SPE. Residues 96–98 and N106 contribute to the ATP site; that span reads RNN. Y115 lines the substrate pocket. An ATP-binding site is contributed by 241–242; the sequence is EL. E248 contacts substrate. G297 is a binding site for ATP.

Belongs to the class-II aminoacyl-tRNA synthetase family. EpmA subfamily. In terms of assembly, homodimer.

The catalysed reaction is D-beta-lysine + L-lysyl-[protein] + ATP = N(6)-((3R)-3,6-diaminohexanoyl)-L-lysyl-[protein] + AMP + diphosphate + H(+). In terms of biological role, with EpmB is involved in the beta-lysylation step of the post-translational modification of translation elongation factor P (EF-P). Catalyzes the ATP-dependent activation of (R)-beta-lysine produced by EpmB, forming a lysyl-adenylate, from which the beta-lysyl moiety is then transferred to the epsilon-amino group of a conserved specific lysine residue in EF-P. This is Elongation factor P--(R)-beta-lysine ligase from Buchnera aphidicola subsp. Baizongia pistaciae (strain Bp).